Consider the following 137-residue polypeptide: Large ribosomal subunit protein uL16c (137 aa).

Belongs to the universal ribosomal protein uL16 family. Part of the 50S ribosomal subunit.

The protein resides in the plastid. It localises to the chloroplast. This is Large ribosomal subunit protein uL16c from Adiantum capillus-veneris (Maidenhair fern).